The chain runs to 918 residues: Hexokinase-1 (918 aa).

Met-1 carries the N-acetylmethionine modification. Residues 1–10 form a mitochondrial-binding peptide (MBP) region; the sequence is MIAAQLLAYY. 2 Hexokinase domains span residues 16-458 and 464-906; these read DDQV…MVTA and AEQH…LITA. ATP contacts are provided by residues Arg-30 and 84 to 89; that span reads DLGGSS. Positions 73-207 are hexokinase small subdomain 1; the sequence is DGSEKGDFIA…DYDANIVAVV (135 aa). D-glucose 6-phosphate is bound at residue 84-88; that stretch reads DLGGS. D-glucose contacts are provided by residues Ser-155, 172–173, and 208–209; these read TK and ND. The segment at 208 to 447 is hexokinase large subdomain 1; it reads NDTVGTMMTC…SDVRFLLSES (240 aa). D-glucose 6-phosphate contacts are provided by Asp-209 and Thr-232. D-glucose-binding positions include Asn-235, Glu-260, and 291–294; that span reads QLFE. Residue Ser-337 is modified to Phosphoserine. Residue 413-415 participates in D-glucose 6-phosphate binding; it reads DGS. 425 to 426 contributes to the ATP binding site; that stretch reads RR. Residues Thr-449, 532 to 536, and Ser-603 each bind D-glucose 6-phosphate; that span reads DLGGT. The segment at 521-655 is hexokinase small subdomain 2; sequence DGTEHGDFLA…EFDLDVVAVV (135 aa). Residue 532-537 participates in ATP binding; that stretch reads DLGGTN. Residues 620 to 621 and 656 to 657 each bind D-glucose; these read TK and ND. The interval 656–895 is hexokinase large subdomain 2; the sequence is NDTVGTMMTC…CTVSFLLSED (240 aa). Residues Asp-657 and Thr-680 each contribute to the D-glucose 6-phosphate site. Thr-680 is an ATP binding site. Positions 683, 708, and 742 each coordinate D-glucose. ATP-binding positions include 747–748, 784–788, and 863–867; these read GM, TKFLS, and TLYKL. D-glucose 6-phosphate-binding positions include 861–863 and Ser-897; that span reads DGT.

The protein belongs to the hexokinase family. In terms of assembly, monomer. Interacts with RABL2/RABL2A; binds preferentially to GTP-bound RABL2. Interacts with VDAC1. The HK1-VDAC1 complex interacts with ATF2. Interacts (via N-terminal spermatogenic cell-specific region) with PFKM (via C-terminus). Interacts with SMAD5. In terms of tissue distribution, expressed in flagella of epididymal sperm.

Its subcellular location is the mitochondrion outer membrane. The protein resides in the cytoplasm. It localises to the cytosol. The enzyme catalyses a D-hexose + ATP = a D-hexose 6-phosphate + ADP + H(+). It catalyses the reaction D-fructose + ATP = D-fructose 6-phosphate + ADP + H(+). It carries out the reaction D-glucose + ATP = D-glucose 6-phosphate + ADP + H(+). The catalysed reaction is D-mannose + ATP = D-mannose 6-phosphate + ADP + H(+). The enzyme catalyses D-glucosamine + ATP = D-glucosamine 6-phosphate + ADP + H(+). The protein operates within carbohydrate metabolism; hexose metabolism. It functions in the pathway carbohydrate degradation; glycolysis; D-glyceraldehyde 3-phosphate and glycerone phosphate from D-glucose: step 1/4. Its activity is regulated as follows. Hexokinase is an allosteric enzyme inhibited by its product D-glucose 6-phosphate. Hexokinase activity is inhibited by N-acetyl-D-glucosamine. Functionally, catalyzes the phosphorylation of various hexoses, such as D-glucose, D-glucosamine, D-fructose, D-mannose and 2-deoxy-D-glucose, to hexose 6-phosphate (D-glucose 6-phosphate, D-glucosamine 6-phosphate, D-fructose 6-phosphate, D-mannose 6-phosphate and 2-deoxy-D-glucose 6-phosphate, respectively). Mediates the initial step of glycolysis by catalyzing phosphorylation of D-glucose to D-glucose 6-phosphate. Involved in innate immunity and inflammation by acting as a pattern recognition receptor for bacterial peptidoglycan. When released in the cytosol, N-acetyl-D-glucosamine component of bacterial peptidoglycan inhibits the hexokinase activity of HK1 and causes its dissociation from mitochondrial outer membrane, thereby activating the NLRP3 inflammasome. This chain is Hexokinase-1, found in Rattus norvegicus (Rat).